We begin with the raw amino-acid sequence, 484 residues long: Membrane-bound lytic murein transglycosylase F (484 aa).

Residues 1–18 (MKGLLLRIIAAFALVLWA) form the signal peptide. The tract at residues 19–267 (IDMVFPWQQM…RIEEKYFNHF (249 aa)) is non-LT domain. The segment at 268–484 (SQFDYVDMRQ…PLTDNQEKQE (217 aa)) is LT domain. The active site involves glutamate 312. The interval 459-484 (ADNKDKPSETDENLPLPLTDNQEKQE) is disordered.

In the N-terminal section; belongs to the bacterial solute-binding protein 3 family. This sequence in the C-terminal section; belongs to the transglycosylase Slt family.

The protein localises to the cell outer membrane. It carries out the reaction Exolytic cleavage of the (1-&gt;4)-beta-glycosidic linkage between N-acetylmuramic acid (MurNAc) and N-acetylglucosamine (GlcNAc) residues in peptidoglycan, from either the reducing or the non-reducing ends of the peptidoglycan chains, with concomitant formation of a 1,6-anhydrobond in the MurNAc residue.. In terms of biological role, murein-degrading enzyme that degrades murein glycan strands and insoluble, high-molecular weight murein sacculi, with the concomitant formation of a 1,6-anhydromuramoyl product. Lytic transglycosylases (LTs) play an integral role in the metabolism of the peptidoglycan (PG) sacculus. Their lytic action creates space within the PG sacculus to allow for its expansion as well as for the insertion of various structures such as secretion systems and flagella. The chain is Membrane-bound lytic murein transglycosylase F from Mannheimia succiniciproducens (strain KCTC 0769BP / MBEL55E).